Reading from the N-terminus, the 331-residue chain is Anthranilate phosphoribosyltransferase (331 aa).

5-phospho-alpha-D-ribose 1-diphosphate-binding positions include G79, 82–83 (GD), T87, 89–92 (NIST), 107–115 (KHGNYGATS), and A119. G79 provides a ligand contact to anthranilate. S91 is a Mg(2+) binding site. Anthranilate is bound at residue N110. R165 contributes to the anthranilate binding site. Residues D223 and E224 each coordinate Mg(2+).

The protein belongs to the anthranilate phosphoribosyltransferase family. In terms of assembly, homodimer. Requires Mg(2+) as cofactor.

It carries out the reaction N-(5-phospho-beta-D-ribosyl)anthranilate + diphosphate = 5-phospho-alpha-D-ribose 1-diphosphate + anthranilate. It functions in the pathway amino-acid biosynthesis; L-tryptophan biosynthesis; L-tryptophan from chorismate: step 2/5. Functionally, catalyzes the transfer of the phosphoribosyl group of 5-phosphorylribose-1-pyrophosphate (PRPP) to anthranilate to yield N-(5'-phosphoribosyl)-anthranilate (PRA). The polypeptide is Anthranilate phosphoribosyltransferase (Bacteroides fragilis (strain YCH46)).